The chain runs to 92 residues: UPF0223 protein SSP1692 (92 aa).

The protein belongs to the UPF0223 family.

The chain is UPF0223 protein SSP1692 from Staphylococcus saprophyticus subsp. saprophyticus (strain ATCC 15305 / DSM 20229 / NCIMB 8711 / NCTC 7292 / S-41).